The following is a 169-amino-acid chain: Putative pre-16S rRNA nuclease (169 aa).

Residues 1–19 are compositionally biased toward basic and acidic residues; the sequence is MTDSDHRLPDRPGEGDPGR. A disordered region spans residues 1-24; that stretch reads MTDSDHRLPDRPGEGDPGRGRRIG.

This sequence belongs to the YqgF nuclease family.

It localises to the cytoplasm. In terms of biological role, could be a nuclease involved in processing of the 5'-end of pre-16S rRNA. The protein is Putative pre-16S rRNA nuclease of Mycobacterium sp. (strain KMS).